Here is a 235-residue protein sequence, read N- to C-terminus: Glycerol-3-phosphate acyltransferase (235 aa).

6 helical membrane passes run 4–24 (LIAI…IMAG), 56–76 (AVTL…VAFF), 94–114 (LLAG…GFKG), 122–142 (AGML…IFLL), 152–172 (VASI…KYIF), and 191–211 (FHDS…LAIL).

Belongs to the PlsY family. As to quaternary structure, probably interacts with PlsX.

Its subcellular location is the cell inner membrane. It carries out the reaction an acyl phosphate + sn-glycerol 3-phosphate = a 1-acyl-sn-glycero-3-phosphate + phosphate. It participates in lipid metabolism; phospholipid metabolism. Functionally, catalyzes the transfer of an acyl group from acyl-phosphate (acyl-PO(4)) to glycerol-3-phosphate (G3P) to form lysophosphatidic acid (LPA). This enzyme utilizes acyl-phosphate as fatty acyl donor, but not acyl-CoA or acyl-ACP. The polypeptide is Glycerol-3-phosphate acyltransferase (Chlorobium phaeobacteroides (strain DSM 266 / SMG 266 / 2430)).